The following is a 311-amino-acid chain: tRNA dimethylallyltransferase (311 aa).

An ATP-binding site is contributed by 10 to 17 (GPTAVGKT). 12–17 (TAVGKT) contributes to the substrate binding site. The segment at 35-38 (DSMQ) is interaction with substrate tRNA.

The protein belongs to the IPP transferase family. In terms of assembly, monomer. It depends on Mg(2+) as a cofactor.

It catalyses the reaction adenosine(37) in tRNA + dimethylallyl diphosphate = N(6)-dimethylallyladenosine(37) in tRNA + diphosphate. In terms of biological role, catalyzes the transfer of a dimethylallyl group onto the adenine at position 37 in tRNAs that read codons beginning with uridine, leading to the formation of N6-(dimethylallyl)adenosine (i(6)A). In Anoxybacillus flavithermus (strain DSM 21510 / WK1), this protein is tRNA dimethylallyltransferase.